We begin with the raw amino-acid sequence, 473 residues long: Ornithine decarboxylase (473 aa).

An N6-(pyridoxal phosphate)lysine modification is found at lysine 106. Pyridoxal 5'-phosphate is bound by residues serine 240, glycine 277, and 313–316 (EPGR). 367–368 (FD) contributes to the substrate binding site. The active-site Proton donor; shared with dimeric partner is the cysteine 417. A substrate-binding site is contributed by aspartate 418. Residue tyrosine 447 participates in pyridoxal 5'-phosphate binding.

The protein belongs to the Orn/Lys/Arg decarboxylase class-II family. As to quaternary structure, homodimer. Only the dimer is catalytically active, as the active sites are constructed of residues from both monomers. Pyridoxal 5'-phosphate serves as cofactor.

It is found in the cytoplasm. The enzyme catalyses L-ornithine + H(+) = putrescine + CO2. It participates in amine and polyamine biosynthesis; putrescine biosynthesis via L-ornithine pathway; putrescine from L-ornithine: step 1/1. Inhibited by antizyme (AZ) OAZ1 in response to polyamine levels. AZ inhibits the assembly of the functional homodimer by binding to ODC monomers and targeting them for ubiquitin-independent proteolytic destruction by the 26S proteasome. Its function is as follows. Catalyzes the first and rate-limiting step of polyamine biosynthesis that converts ornithine into putrescine, which is the precursor for the polyamines, spermidine and spermine. Polyamines are essential for cell proliferation and are implicated in cellular processes, ranging from DNA replication to apoptosis. The protein is Ornithine decarboxylase (SPE1) of Candida albicans (strain SC5314 / ATCC MYA-2876) (Yeast).